A 160-amino-acid polypeptide reads, in one-letter code: Xanthine-guanine phosphoribosyltransferase (160 aa).

5-phospho-alpha-D-ribose 1-diphosphate is bound by residues 41-42 (RG) and 93-101 (DDLVDTGRT). Residue Asp94 coordinates Mg(2+). Asp97 and Ile140 together coordinate guanine. Residues Asp97 and Ile140 each coordinate xanthine. GMP-binding positions include 97 to 101 (DTGRT) and 139 to 140 (WI).

It belongs to the purine/pyrimidine phosphoribosyltransferase family. XGPT subfamily. In terms of assembly, homotetramer. Requires Mg(2+) as cofactor.

The protein localises to the cell inner membrane. The enzyme catalyses GMP + diphosphate = guanine + 5-phospho-alpha-D-ribose 1-diphosphate. It catalyses the reaction XMP + diphosphate = xanthine + 5-phospho-alpha-D-ribose 1-diphosphate. The catalysed reaction is IMP + diphosphate = hypoxanthine + 5-phospho-alpha-D-ribose 1-diphosphate. It participates in purine metabolism; GMP biosynthesis via salvage pathway; GMP from guanine: step 1/1. The protein operates within purine metabolism; XMP biosynthesis via salvage pathway; XMP from xanthine: step 1/1. Purine salvage pathway enzyme that catalyzes the transfer of the ribosyl-5-phosphate group from 5-phospho-alpha-D-ribose 1-diphosphate (PRPP) to the N9 position of the 6-oxopurines guanine and xanthine to form the corresponding ribonucleotides GMP (guanosine 5'-monophosphate) and XMP (xanthosine 5'-monophosphate), with the release of PPi. To a lesser extent, also acts on hypoxanthine. The protein is Xanthine-guanine phosphoribosyltransferase of Desulfotalea psychrophila (strain LSv54 / DSM 12343).